Reading from the N-terminus, the 606-residue chain is Sodium-independent sulfate anion transporter (606 aa).

The Extracellular portion of the chain corresponds to 1–51; sequence MPSSVTALGQARSSGPGMAPSACCCSPAALQRRLPILAWLPSYSLQWLKMD. Residues 52 to 72 form a helical membrane-spanning segment; it reads FVAGLSVGLTAIPQALAYAEV. Ala73 is a topological domain (cytoplasmic). Residues 74-94 traverse the membrane as a helical segment; that stretch reads GLPPQYGLYSAFMGCFVYFFL. The Extracellular portion of the chain corresponds to 95-100; the sequence is GTSRDV. Residues 101-117 form a helical membrane-spanning segment; it reads TLGPTAIMSLLVSFYTF. Residues 118–119 lie on the Cytoplasmic side of the membrane; that stretch reads HE. Residues 120 to 140 form a helical membrane-spanning segment; the sequence is PAYAVLLAFLSGCIQLAMGVL. Residues 141–147 are Extracellular-facing; the sequence is RLGFLLD. Residues 148-168 form a helical membrane-spanning segment; the sequence is FISYPVIKGFTSAAAVTIGFG. Residues 169–197 lie on the Cytoplasmic side of the membrane; sequence QIKNLLGLQNIPRPFFLQVYHTFLRIAET. A helical transmembrane segment spans residues 198–218; sequence RVGDAVLGLVCMLLLLVLKLM. Residues 219–250 are Extracellular-facing; it reads RDHVPPVHPEMPPGVRLSRGLVWAATTARNAL. Residues 251–271 form a helical membrane-spanning segment; sequence VVSFAALVAYSFEVTGYQPFI. Over 272-307 the chain is Cytoplasmic; the sequence is LTGETAEGLPPVRIPPFSVTTANGTISFTEMVQDMG. A helical membrane pass occupies residues 308–328; it reads AGLAVVPLMGLLESIAVAKAF. The Extracellular portion of the chain corresponds to 329–341; it reads ASQNNYRIDANQE. A helical membrane pass occupies residues 342–362; the sequence is LLAIGLTNMLGSLVSSYPVTG. The Cytoplasmic portion of the chain corresponds to 363-374; sequence SFGRTAVNAQSG. The helical transmembrane segment at 375 to 395 threads the bilayer; it reads VCTPAGGLVTGVLVLLSLDYL. Over 396–398 the chain is Extracellular; sequence TSL. A helical transmembrane segment spans residues 399-419; it reads FYYIPKSALAAVIIMAVAPLF. Residues 420 to 441 are Cytoplasmic-facing; that stretch reads DTKIFRTLWRVKRLDLLPLCVT. The helical transmembrane segment at 442 to 462 threads the bilayer; it reads FLLCFWEVQYGILAGALVSLL. Over 463-606 the chain is Extracellular; the sequence is MLLHSAARPE…LDQKVALLKA (144 aa). The STAS domain occupies 470–584; it reads RPETKVSEGP…EAEKHLRQEP (115 aa).

This sequence belongs to the SLC26A/SulP transporter (TC 2.A.53) family. Detected in all tissues tested with highest expression observed in brain, kidney, HEVEC and placenta and lowest in pancreas, skeletal muscle, liver, lung and heart.

The protein localises to the cell membrane. The protein resides in the lysosome membrane. It is found in the apical cell membrane. Its subcellular location is the basolateral cell membrane. The enzyme catalyses hydrogencarbonate(in) + chloride(out) = hydrogencarbonate(out) + chloride(in). It catalyses the reaction sulfate(in) + H(+)(in) = sulfate(out) + H(+)(out). The catalysed reaction is oxalate(in) + chloride(out) = oxalate(out) + chloride(in). In terms of biological role, sodium-independent anion exchanger mediating bicarbonate, chloride, sulfate and oxalate transport. Exhibits sodium-independent sulfate anion transporter activity that may cooperate with SLC26A2 to mediate DIDS-sensitive sulfate uptake into high endothelial venules endothelial cells (HEVEC). In the kidney, mediates chloride-bicarbonate exchange, facilitating V-ATPase-mediated acid secretion. May function as a chloride channel, playing an important role in moderating chloride homeostasis and neuronal activity in the cerebellum. The chain is Sodium-independent sulfate anion transporter from Homo sapiens (Human).